The chain runs to 306 residues: Glutathione transport system permease protein GsiC (306 aa).

Topologically, residues 1-8 (MLNYFIKR) are cytoplasmic. A helical transmembrane segment spans residues 9–29 (LLGLIPTLLIVMVLVFLFVHL). The Periplasmic segment spans residues 30–98 (LPGDPARLAA…QEIALRFMPT (69 aa)). The 198-residue stretch at 95-292 (FMPTFWLTVC…LEFILINLLV (198 aa)) folds into the ABC transmembrane type-1 domain. Residues 99 to 119 (FWLTVCSMAWAVIFGMAIGIV) form a helical membrane-spanning segment. Residues 120-130 (SAVWRNGWPDR) lie on the Cytoplasmic side of the membrane. A helical transmembrane segment spans residues 131 to 151 (IGMTLAVSGLSFPAFALGMLL). Residues 152–168 (MQIFSVELGWLPTVGAD) lie on the Periplasmic side of the membrane. Residues 169-189 (TWLHYILPSLTLGAAVAAVMA) traverse the membrane as a helical segment. Residues 190-228 (RFTRASFVDVLQEDYMRTARAKGVRESLVVLKHGLRNAL) lie on the Cytoplasmic side of the membrane. Residues 229–249 (IPVVTMMGLQFGFLLGGSIVV) traverse the membrane as a helical segment. Residues 250–278 (EKVFNWPGLGRLLVDSVEMRDYPVIQAEV) are Periplasmic-facing. Residues 279-299 (LLFSLEFILINLLVDMLYAAI) form a helical membrane-spanning segment. The Cytoplasmic segment spans residues 300–306 (NPAIRYK).

The protein belongs to the binding-protein-dependent transport system permease family. The complex is composed of two ATP-binding proteins (GsiA), two transmembrane proteins (GsiC and GsiD) and a solute-binding protein (GsiB).

The protein resides in the cell inner membrane. Functionally, part of the ABC transporter complex GsiABCD involved in glutathione import. Probably responsible for the translocation of the substrate across the membrane. The sequence is that of Glutathione transport system permease protein GsiC from Pectobacterium atrosepticum (strain SCRI 1043 / ATCC BAA-672) (Erwinia carotovora subsp. atroseptica).